A 343-amino-acid chain; its full sequence is Cytoplasmic tRNA 2-thiolation protein 1 (343 aa).

This sequence belongs to the TtcA family. CTU1/NCS6/ATPBD3 subfamily.

It is found in the cytoplasm. It participates in tRNA modification; 5-methoxycarbonylmethyl-2-thiouridine-tRNA biosynthesis. Plays a central role in 2-thiolation of mcm(5)S(2)U at tRNA wobble positions of tRNA(Lys), tRNA(Glu) and tRNA(Gln). Directly binds tRNAs and probably acts by catalyzing adenylation of tRNAs, an intermediate required for 2-thiolation. It is unclear whether it acts as a sulfurtransferase that transfers sulfur from thiocarboxylated URM1 onto the uridine of tRNAs at wobble position. The polypeptide is Cytoplasmic tRNA 2-thiolation protein 1 (Drosophila mojavensis (Fruit fly)).